The following is a 449-amino-acid chain: Chromosomal replication initiator protein DnaA (449 aa).

The segment at 1–75 (MDTNNDIEKR…EILSQNKVGM (75 aa)) is domain I, interacts with DnaA modulators. Residues 75 to 106 (MHLAHSVDVRIEVASKVHVSDHSNINYKATKS) form a domain II region. The domain III, AAA+ region stretch occupies residues 107 to 321 (SIKDSYTFEN…GAIIKISVNA (215 aa)). The ATP site is built by G151, G153, K154, and T155. The domain IV, binds dsDNA stretch occupies residues 322–449 (NLMNAPIDLN…LNELNDKKQH (128 aa)).

This sequence belongs to the DnaA family. In terms of assembly, oligomerizes as a right-handed, spiral filament on DNA at oriC.

The protein localises to the cytoplasm. In terms of biological role, plays an essential role in the initiation and regulation of chromosomal replication. ATP-DnaA binds to the origin of replication (oriC) to initiate formation of the DNA replication initiation complex once per cell cycle. Binds the DnaA box (a 9 base pair repeat at the origin) and separates the double-stranded (ds)DNA. Forms a right-handed helical filament on oriC DNA; dsDNA binds to the exterior of the filament while single-stranded (ss)DNA is stabiized in the filament's interior. The ATP-DnaA-oriC complex binds and stabilizes one strand of the AT-rich DNA unwinding element (DUE), permitting loading of DNA polymerase. After initiation quickly degrades to an ADP-DnaA complex that is not apt for DNA replication. Binds acidic phospholipids. The protein is Chromosomal replication initiator protein DnaA of Helicobacter acinonychis (strain Sheeba).